The sequence spans 136 residues: uncharacterized protein (136 aa).

Disordered stretches follow at residues 58-82 (TSDDDEKPGNSKIKSHTDQPPTTQT) and 112-136 (NNPKIKTNNPNEEFENTGADSVVTQ).

This is an uncharacterized protein from Dictyostelium discoideum (Social amoeba).